Reading from the N-terminus, the 658-residue chain is Translation factor GUF1, mitochondrial (658 aa).

The transit peptide at 1-40 (MRGCLQTVRWLTSAWQRPRSYSPLSRAAPCRFFNVSIPRN) directs the protein to the mitochondrion. In terms of domain architecture, tr-type G spans 60 to 240 (DRFRNFCIVA…TVVEQIPAPV (181 aa)). GTP contacts are provided by residues 69 to 76 (AHVDHGKS), 133 to 137 (DTPGH), and 187 to 190 (NKVD).

Belongs to the TRAFAC class translation factor GTPase superfamily. Classic translation factor GTPase family. LepA subfamily.

The protein resides in the mitochondrion inner membrane. The catalysed reaction is GTP + H2O = GDP + phosphate + H(+). Promotes mitochondrial protein synthesis. May act as a fidelity factor of the translation reaction, by catalyzing a one-codon backward translocation of tRNAs on improperly translocated ribosomes. Binds to mitochondrial ribosomes in a GTP-dependent manner. The sequence is that of Translation factor GUF1, mitochondrial from Paracoccidioides lutzii (strain ATCC MYA-826 / Pb01) (Paracoccidioides brasiliensis).